We begin with the raw amino-acid sequence, 78 residues long: Exodeoxyribonuclease 7 small subunit (78 aa).

It belongs to the XseB family. Heterooligomer composed of large and small subunits.

The protein resides in the cytoplasm. The enzyme catalyses Exonucleolytic cleavage in either 5'- to 3'- or 3'- to 5'-direction to yield nucleoside 5'-phosphates.. Its function is as follows. Bidirectionally degrades single-stranded DNA into large acid-insoluble oligonucleotides, which are then degraded further into small acid-soluble oligonucleotides. This is Exodeoxyribonuclease 7 small subunit from Desulfitobacterium hafniense (strain Y51).